Reading from the N-terminus, the 188-residue chain is M-phase phosphoprotein 6 homolog (188 aa).

Residues 93 to 188 (EENVDEKDVS…NKNKKKKKRN (96 aa)) are disordered. Positions 120 to 149 (LTERERRKQELVSKKAEASRKMEVKAPAKE) are enriched in basic and acidic residues. S167 carries the post-translational modification Phosphoserine. Residues 174 to 188 (RKTKKNKNKKKKKRN) show a composition bias toward basic residues.

Belongs to the MPP6 family. Associates with the RNA exosome complex.

The protein localises to the nucleus. In terms of biological role, RNA-binding protein that associates with the RNA exosome complex. The chain is M-phase phosphoprotein 6 homolog from Schizosaccharomyces pombe (strain 972 / ATCC 24843) (Fission yeast).